We begin with the raw amino-acid sequence, 42 residues long: Envelope protein P10 (42 aa).

Residues 20 to 40 traverse the membrane as a helical segment; the sequence is TTAAKIAVVYALVGLVGGLLL.

The protein resides in the virion membrane. Its function is as follows. Involved in cell lysis. This chain is Envelope protein P10 (P10), found in Pseudomonas savastanoi pv. phaseolicola (Pseudomonas syringae pv. phaseolicola).